A 251-amino-acid polypeptide reads, in one-letter code: Phosphate import ATP-binding protein PstB (251 aa).

An ABC transporter domain is found at 5–246 (MNSKDVNFWY…PENKKTEDYI (242 aa)). 37–44 (GPSGCGKS) contacts ATP.

The protein belongs to the ABC transporter superfamily. Phosphate importer (TC 3.A.1.7) family. The complex is composed of two ATP-binding proteins (PstB), two transmembrane proteins (PstC and PstA) and a solute-binding protein (PstS).

It is found in the cell membrane. The enzyme catalyses phosphate(out) + ATP + H2O = ADP + 2 phosphate(in) + H(+). In terms of biological role, part of the ABC transporter complex PstSACB involved in phosphate import. Responsible for energy coupling to the transport system. The sequence is that of Phosphate import ATP-binding protein PstB from Methanococcus maripaludis (strain DSM 14266 / JCM 13030 / NBRC 101832 / S2 / LL).